The sequence spans 259 residues: 3-deoxy-manno-octulosonate cytidylyltransferase (259 aa).

The protein belongs to the KdsB family.

It localises to the cytoplasm. It catalyses the reaction 3-deoxy-alpha-D-manno-oct-2-ulosonate + CTP = CMP-3-deoxy-beta-D-manno-octulosonate + diphosphate. The protein operates within nucleotide-sugar biosynthesis; CMP-3-deoxy-D-manno-octulosonate biosynthesis; CMP-3-deoxy-D-manno-octulosonate from 3-deoxy-D-manno-octulosonate and CTP: step 1/1. Its pathway is bacterial outer membrane biogenesis; lipopolysaccharide biosynthesis. Its function is as follows. Activates KDO (a required 8-carbon sugar) for incorporation into bacterial lipopolysaccharide in Gram-negative bacteria. The polypeptide is 3-deoxy-manno-octulosonate cytidylyltransferase (Maricaulis maris (strain MCS10) (Caulobacter maris)).